The primary structure comprises 339 residues: Phosphoribosylformylglycinamidine cyclo-ligase (339 aa).

It belongs to the AIR synthase family.

Its subcellular location is the cytoplasm. It catalyses the reaction 2-formamido-N(1)-(5-O-phospho-beta-D-ribosyl)acetamidine + ATP = 5-amino-1-(5-phospho-beta-D-ribosyl)imidazole + ADP + phosphate + H(+). It functions in the pathway purine metabolism; IMP biosynthesis via de novo pathway; 5-amino-1-(5-phospho-D-ribosyl)imidazole from N(2)-formyl-N(1)-(5-phospho-D-ribosyl)glycinamide: step 2/2. This Desulfitobacterium hafniense (strain DSM 10664 / DCB-2) protein is Phosphoribosylformylglycinamidine cyclo-ligase.